Here is a 412-residue protein sequence, read N- to C-terminus: Short-chain specific acyl-CoA dehydrogenase, mitochondrial (412 aa).

A mitochondrion-targeting transit peptide spans 1–24 (MAAALLARARGPLRRALGVRDWRR). At threonine 27 the chain carries Phosphothreonine. Position 51 is an N6-acetyllysine; alternate (lysine 51). The residue at position 51 (lysine 51) is an N6-succinyllysine; alternate. Lysine 72 is subject to N6-acetyllysine. Position 129 is an N6-acetyllysine; alternate (lysine 129). Lysine 129 bears the N6-succinyllysine; alternate mark. FAD-binding positions include 152-161 (FALSEPGNGS) and 185-187 (WIT). Serine 161 is a substrate binding site. Residue lysine 208 is modified to N6-acetyllysine. Lysine 262 is subject to N6-acetyllysine; alternate. Lysine 262 is modified (N6-succinyllysine; alternate). Residue 269 to 272 (DMGR) coordinates substrate. An N6-acetyllysine modification is found at lysine 292. Arginine 297 provides a ligand contact to FAD. N6-acetyllysine; alternate is present on lysine 306. Position 306 is an N6-succinyllysine; alternate (lysine 306). FAD-binding positions include glutamine 308 and 365 to 369 (QILGG). Catalysis depends on glutamate 392, which acts as the Proton acceptor. Glycine 393 serves as a coordination point for substrate. 394-396 (TSE) contacts FAD.

It belongs to the acyl-CoA dehydrogenase family. In terms of assembly, homotetramer. It depends on FAD as a cofactor.

It localises to the mitochondrion matrix. The catalysed reaction is a short-chain 2,3-saturated fatty acyl-CoA + oxidized [electron-transfer flavoprotein] + H(+) = a short-chain (2E)-enoyl-CoA + reduced [electron-transfer flavoprotein]. It catalyses the reaction butanoyl-CoA + oxidized [electron-transfer flavoprotein] + H(+) = (2E)-butenoyl-CoA + reduced [electron-transfer flavoprotein]. It carries out the reaction pentanoyl-CoA + oxidized [electron-transfer flavoprotein] + H(+) = (2E)-pentenoyl-CoA + reduced [electron-transfer flavoprotein]. The enzyme catalyses hexanoyl-CoA + oxidized [electron-transfer flavoprotein] + H(+) = (2E)-hexenoyl-CoA + reduced [electron-transfer flavoprotein]. It functions in the pathway lipid metabolism; mitochondrial fatty acid beta-oxidation. In terms of biological role, short-chain specific acyl-CoA dehydrogenase is one of the acyl-CoA dehydrogenases that catalyze the first step of mitochondrial fatty acid beta-oxidation, an aerobic process breaking down fatty acids into acetyl-CoA and allowing the production of energy from fats. The first step of fatty acid beta-oxidation consists in the removal of one hydrogen from C-2 and C-3 of the straight-chain fatty acyl-CoA thioester, resulting in the formation of trans-2-enoyl-CoA. Among the different mitochondrial acyl-CoA dehydrogenases, short-chain specific acyl-CoA dehydrogenase acts specifically on acyl-CoAs with saturated 4 to 6 carbons long primary chains. The protein is Short-chain specific acyl-CoA dehydrogenase, mitochondrial (Acads) of Mus musculus (Mouse).